Here is a 712-residue protein sequence, read N- to C-terminus: Glucans biosynthesis glucosyltransferase H (712 aa).

6 helical membrane-spanning segments follow: residues 57 to 77 (LAIMLATAALTCAGGYEMYQV), 89 to 109 (IVLALFAALFAWVALSFVSAL), 408 to 428 (GIGSYITAPMWLAFLVAGILI), 462 to 482 (FAGTMGLLMMPKLLALILVVI), 552 to 572 (YAAPSWLGAVMAVSALLVSWP), and 573 to 593 (LLLWMMPVILGLVLAIPVALL).

The protein belongs to the glycosyltransferase 2 family. OpgH subfamily.

The protein localises to the cell inner membrane. Its pathway is glycan metabolism; osmoregulated periplasmic glucan (OPG) biosynthesis. Its function is as follows. Involved in the biosynthesis of osmoregulated periplasmic glucans (OPGs). The chain is Glucans biosynthesis glucosyltransferase H from Rhodopseudomonas palustris (strain BisA53).